The chain runs to 644 residues: Protein ETHYLENE-INSENSITIVE 3-like 1b (644 aa).

2 disordered regions span residues 47 to 75 and 97 to 131; these read QCVM…DDDV and ELQL…KMSR. Residues 66–75 show a composition bias toward acidic residues; sequence AGEDDSDDDV.

It belongs to the EIN3 family. As to expression, highly expressed in roots. Expressed at low levels in leaves and panicles.

Its subcellular location is the nucleus. Transcription factor acting as a positive regulator in the ethylene response pathway. Involved in wound signaling by binding specifically to the DNA sequence 5'-ATGTACCT-3' found in the promoter of some wound-inducible genes. Binds directly to the DNA sequence 5'-TGTTACAAATACC-3' in the promoter of the GA20OX2 gene to activate its expression at the transcriptional level during ethylene signaling. The chain is Protein ETHYLENE-INSENSITIVE 3-like 1b from Oryza sativa subsp. japonica (Rice).